The sequence spans 320 residues: Methionyl-tRNA formyltransferase (320 aa).

Ser111 to Pro114 contacts (6S)-5,6,7,8-tetrahydrofolate.

This sequence belongs to the Fmt family.

The enzyme catalyses L-methionyl-tRNA(fMet) + (6R)-10-formyltetrahydrofolate = N-formyl-L-methionyl-tRNA(fMet) + (6S)-5,6,7,8-tetrahydrofolate + H(+). Functionally, attaches a formyl group to the free amino group of methionyl-tRNA(fMet). The formyl group appears to play a dual role in the initiator identity of N-formylmethionyl-tRNA by promoting its recognition by IF2 and preventing the misappropriation of this tRNA by the elongation apparatus. The polypeptide is Methionyl-tRNA formyltransferase (Bifidobacterium adolescentis (strain ATCC 15703 / DSM 20083 / NCTC 11814 / E194a)).